A 634-amino-acid chain; its full sequence is Chaperone protein HtpG (634 aa).

An a; substrate-binding region spans residues 1-344 (MSETVSHNKE…SNDLPLNVSR (344 aa)). The tract at residues 345-561 (EILQDNKVTQ…DFEMGTQMAK (217 aa)) is b. A c region spans residues 562–634 (LLEAAGQAVP…GAINKLLTKV (73 aa)).

The protein belongs to the heat shock protein 90 family. In terms of assembly, homodimer.

The protein localises to the cytoplasm. Molecular chaperone. Has ATPase activity. The chain is Chaperone protein HtpG from Vibrio campbellii (strain ATCC BAA-1116).